Consider the following 169-residue polypeptide: NAD(P)H-quinone oxidoreductase subunit J, chloroplastic (169 aa).

Belongs to the complex I 30 kDa subunit family. In terms of assembly, NDH is composed of at least 16 different subunits, 5 of which are encoded in the nucleus.

It localises to the plastid. The protein localises to the chloroplast thylakoid membrane. It carries out the reaction a plastoquinone + NADH + (n+1) H(+)(in) = a plastoquinol + NAD(+) + n H(+)(out). The catalysed reaction is a plastoquinone + NADPH + (n+1) H(+)(in) = a plastoquinol + NADP(+) + n H(+)(out). Functionally, NDH shuttles electrons from NAD(P)H:plastoquinone, via FMN and iron-sulfur (Fe-S) centers, to quinones in the photosynthetic chain and possibly in a chloroplast respiratory chain. The immediate electron acceptor for the enzyme in this species is believed to be plastoquinone. Couples the redox reaction to proton translocation, and thus conserves the redox energy in a proton gradient. This is NAD(P)H-quinone oxidoreductase subunit J, chloroplastic from Marchantia polymorpha (Common liverwort).